The following is a 379-amino-acid chain: Cobalt-precorrin-5B C(1)-methyltransferase (379 aa).

This sequence belongs to the CbiD family.

The catalysed reaction is Co-precorrin-5B + S-adenosyl-L-methionine = Co-precorrin-6A + S-adenosyl-L-homocysteine. Its pathway is cofactor biosynthesis; adenosylcobalamin biosynthesis; cob(II)yrinate a,c-diamide from sirohydrochlorin (anaerobic route): step 6/10. Its function is as follows. Catalyzes the methylation of C-1 in cobalt-precorrin-5B to form cobalt-precorrin-6A. The sequence is that of Cobalt-precorrin-5B C(1)-methyltransferase from Edwardsiella ictaluri (strain 93-146).